A 283-amino-acid polypeptide reads, in one-letter code: Elongation factor Ts (283 aa).

Residues 80–83 (TDFV) form an involved in Mg(2+) ion dislocation from EF-Tu region.

The protein belongs to the EF-Ts family.

The protein localises to the cytoplasm. In terms of biological role, associates with the EF-Tu.GDP complex and induces the exchange of GDP to GTP. It remains bound to the aminoacyl-tRNA.EF-Tu.GTP complex up to the GTP hydrolysis stage on the ribosome. The protein is Elongation factor Ts of Serratia proteamaculans (strain 568).